Here is a 375-residue protein sequence, read N- to C-terminus: Glutamate 5-kinase (375 aa).

ATP is bound at residue Lys-17. Substrate contacts are provided by Ser-58, Asp-145, and Asn-157. Residues 177–178 (SD) and 219–225 (TGGMVTK) each bind ATP. Positions 281–359 (QGALTLDDGA…RELARELGPA (79 aa)) constitute a PUA domain.

This sequence belongs to the glutamate 5-kinase family.

The protein localises to the cytoplasm. The enzyme catalyses L-glutamate + ATP = L-glutamyl 5-phosphate + ADP. It participates in amino-acid biosynthesis; L-proline biosynthesis; L-glutamate 5-semialdehyde from L-glutamate: step 1/2. Catalyzes the transfer of a phosphate group to glutamate to form L-glutamate 5-phosphate. The protein is Glutamate 5-kinase of Streptomyces avermitilis (strain ATCC 31267 / DSM 46492 / JCM 5070 / NBRC 14893 / NCIMB 12804 / NRRL 8165 / MA-4680).